Here is a 398-residue protein sequence, read N- to C-terminus: cAMP-dependent protein kinase, catalytic subunit-like (398 aa).

Residues 90–344 form the Protein kinase domain; sequence LERIITIGKG…TQDVKDHKWF (255 aa). ATP is bound by residues 96 to 104 and Lys119; that span reads IGKGTFGRV. Residue Asp213 is the Proton acceptor of the active site. An AGC-kinase C-terminal domain is found at 345–398; sequence EKVNWDDTLHLRVEPPIVPTLYHPGDTGNFDDYEEDTTGGPLCSQRDRDLFAEW.

It belongs to the protein kinase superfamily. Ser/Thr protein kinase family. cAMP subfamily.

It carries out the reaction L-seryl-[protein] + ATP = O-phospho-L-seryl-[protein] + ADP + H(+). The enzyme catalyses L-threonyl-[protein] + ATP = O-phospho-L-threonyl-[protein] + ADP + H(+). The chain is cAMP-dependent protein kinase, catalytic subunit-like from Caenorhabditis elegans.